A 185-amino-acid chain; its full sequence is Peptidyl-tRNA hydrolase (185 aa).

Residue Phe-14 coordinates tRNA. The active-site Proton acceptor is the His-19. TRNA is bound by residues Tyr-64, Asn-66, and Asn-112.

It belongs to the PTH family. As to quaternary structure, monomer.

It is found in the cytoplasm. It carries out the reaction an N-acyl-L-alpha-aminoacyl-tRNA + H2O = an N-acyl-L-amino acid + a tRNA + H(+). In terms of biological role, hydrolyzes ribosome-free peptidyl-tRNAs (with 1 or more amino acids incorporated), which drop off the ribosome during protein synthesis, or as a result of ribosome stalling. Functionally, catalyzes the release of premature peptidyl moieties from peptidyl-tRNA molecules trapped in stalled 50S ribosomal subunits, and thus maintains levels of free tRNAs and 50S ribosomes. This Exiguobacterium sp. (strain ATCC BAA-1283 / AT1b) protein is Peptidyl-tRNA hydrolase.